The sequence spans 1627 residues: Formin-like protein 5 (1627 aa).

The region spanning 5-194 (RKFFLKKTPD…HYITRQGSGP (190 aa)) is the Phosphatase tensin-type domain. Cys127 serves as the catalytic Phosphocysteine intermediate. The region spanning 200–337 (SRPLILDSIV…FRAEVVFSDP (138 aa)) is the C2 tensin-type domain. 5 disordered regions span residues 370–413 (EAEE…LEKH), 680–787 (TKRE…YDSS), 801–1181 (KFNV…RGVV), 1241–1261 (AAVPKPNDSSKSDSRRKSLGS), and 1571–1627 (KQAE…KDVG). 4 stretches are compositionally biased toward basic and acidic residues: residues 402-413 (VSREDSGSLEKH), 681-691 (KREESGGRRDV), 700-717 (IEARAKSPRISSDRRQIP), and 726-742 (MPVDHAPEAVLLEEKLG). 6 stretches are compositionally biased toward pro residues: residues 824–835 (APPPPPPPPPPY), 852–870 (QPPPPPPPPPLPPPPPPPA), 877–886 (IPPPPPPPPL), 897–908 (VPPPPPPPPPPR), 931–965 (ISPPPPPPPPPLKPSSGAPCPPPPPPPPPPPPPSA), and 974–1168 (APPP…PPGG). In terms of domain architecture, FH2 spans 1188-1588 (FGAAAARKST…RAEKEAEAEK (401 aa)). Basic and acidic residues-rich tracts occupy residues 1248 to 1261 (DSSKSDSRRKSLGS) and 1571 to 1590 (KQAELDKKRAEKEAEAEKSK). Residues 1600–1611 (KPSNPSRQVKQT) are compositionally biased toward polar residues. Residues 1612-1627 (PDTKTRAASRRGKDVG) show a composition bias toward basic and acidic residues.

This sequence belongs to the formin-like family. Class-II subfamily.

This is Formin-like protein 5 (FH5) from Oryza sativa subsp. japonica (Rice).